The following is a 157-amino-acid chain: Ribosome maturation factor RimP (157 aa).

This sequence belongs to the RimP family.

It localises to the cytoplasm. Its function is as follows. Required for maturation of 30S ribosomal subunits. The chain is Ribosome maturation factor RimP from Bacillus pumilus (strain SAFR-032).